A 423-amino-acid polypeptide reads, in one-letter code: Isovaleryl-CoA dehydrogenase, mitochondrial (423 aa).

The N-terminal 29 residues, M1–A29, are a transit peptide targeting the mitochondrion. An N6-acetyllysine; alternate mark is found at K55, K64, and K75. N6-succinyllysine; alternate is present on residues K55, K64, and K75. Residues L162–S171 and W195–T197 contribute to the FAD site. Position 171 (S171) interacts with substrate. S219–R220 contacts substrate. K238 is modified (N6-acetyllysine). At K259 the chain carries N6-acetyllysine; alternate. K259 carries the N6-succinyllysine; alternate modification. Substrate is bound by residues Y274 and D281–R284. E283 (proton acceptor) is an active-site residue. Position 309 (R309) interacts with FAD. An N6-succinyllysine modification is found at K315. Residues Q320 and Q377–G381 contribute to the FAD site. Residue A404–G405 participates in substrate binding. Position 406-408 (T406–E408) interacts with FAD.

It belongs to the acyl-CoA dehydrogenase family. Homotetramer. Requires FAD as cofactor.

It is found in the mitochondrion matrix. The catalysed reaction is 3-methylbutanoyl-CoA + oxidized [electron-transfer flavoprotein] + H(+) = 3-methylbut-2-enoyl-CoA + reduced [electron-transfer flavoprotein]. It catalyses the reaction pentanoyl-CoA + oxidized [electron-transfer flavoprotein] + H(+) = (2E)-pentenoyl-CoA + reduced [electron-transfer flavoprotein]. The enzyme catalyses hexanoyl-CoA + oxidized [electron-transfer flavoprotein] + H(+) = (2E)-hexenoyl-CoA + reduced [electron-transfer flavoprotein]. It carries out the reaction butanoyl-CoA + oxidized [electron-transfer flavoprotein] + H(+) = (2E)-butenoyl-CoA + reduced [electron-transfer flavoprotein]. It functions in the pathway amino-acid degradation; L-leucine degradation; (S)-3-hydroxy-3-methylglutaryl-CoA from 3-isovaleryl-CoA: step 1/3. Its function is as follows. Catalyzes the conversion of isovaleryl-CoA/3-methylbutanoyl-CoA to 3-methylbut-2-enoyl-CoA as an intermediate step in the leucine (Leu) catabolic pathway. To a lesser extent, is also able to catalyze the oxidation of other saturated short-chain acyl-CoA thioesters as pentanoyl-CoA, hexenoyl-CoA and butenoyl-CoA. This chain is Isovaleryl-CoA dehydrogenase, mitochondrial (IVD), found in Pongo abelii (Sumatran orangutan).